The sequence spans 540 residues: uncharacterized protein (540 aa).

This is an uncharacterized protein from Escherichia coli (strain K12).